The primary structure comprises 352 residues: MEGIAARGVDVRSRAKQYEKLDFLGEGQFATVYKARDKNTDRIVAIKKIKLGHRAEANDGINRTALREIKLLQELSHPNIIGLLDAFGHKSNISLVFDFMETDLEVIIKDTSLVLTPAHIKSYMLMTLQGLEYLHHLWILHRDLKPNNLLLDENGVLKLADFGLAKSFGSPNRIYTHQVVTRWYRSPELLFGARMYGVGVDMWAVGCILAELLLRVPFLPGDSDLDQLTRIFETLGTPTEEQWPGMSSLPDYVAFKSFPGTPLHLIFIAAGDDLLELLQGLFTFNPCARCTASQALRKRYFSNRPAPTPGNLLPRPNCSIEALKEQQNLNLGIKRKRTEGMDQKDIAKKLSF.

A Protein kinase domain is found at 18 to 301; that stretch reads YEKLDFLGEG…ASQALRKRYF (284 aa). Residues 24-32 and K47 each bind ATP; that span reads LGEGQFATV. D143 acts as the Proton acceptor in catalysis. S170 is subject to Phosphoserine; by CDK1 and CDK2. The residue at position 176 (T176) is a Phosphothreonine; by CDK2.

It belongs to the protein kinase superfamily. CMGC Ser/Thr protein kinase family. CDC2/CDKX subfamily. Probably associates with cyclin-H (ccnh) and mat1 to form a multimeric active enzyme. Post-translationally, phosphorylation of Ser-170 during mitosis inactivates the enzyme. Phosphorylation of Thr-176 is required for activity. Phosphorylated at Ser-170 and Thr-176 by CDK2.

The protein localises to the nucleus. It catalyses the reaction L-seryl-[protein] + ATP = O-phospho-L-seryl-[protein] + ADP + H(+). The catalysed reaction is L-threonyl-[protein] + ATP = O-phospho-L-threonyl-[protein] + ADP + H(+). It carries out the reaction [DNA-directed RNA polymerase] + ATP = phospho-[DNA-directed RNA polymerase] + ADP + H(+). Its activity is regulated as follows. Phosphorylation at Thr-176 is required for enzymatic activity. In terms of biological role, serine/threonine kinase involved in cell cycle control and in RNA polymerase II-mediated RNA transcription. Cyclin-dependent kinases (CDKs) are activated by the binding to a cyclin and mediate the progression through the cell cycle. Each different complex controls a specific transition between 2 subsequent phases in the cell cycle. Required for both activation and complex formation of cdk1/cyclin-B during G2-M transition, and for activation of cdk2/cyclins during G1-S transition (but not complex formation). cdk7 is the catalytic subunit of the CDK-activating kinase (CAK) complex. CAK activates the cyclin-associated kinases cdk1, cdk2, cdk4 and cdk6 by threonine phosphorylation, thus regulating cell cycle progression. Initiates transcription by RNA polymerase II by mediating phosphorylation of polr2a at 'Ser-5' of the repetitive C-terminal domain (CTD) when polr2a is in complex with DNA, promoting dissociation from DNA and initiation. CAK complexed to the core-TFIIH basal transcription factor activates RNA polymerase II by serine phosphorylation of the CTD of polr2a, allowing its escape from the promoter and elongation of the transcripts. The polypeptide is Cyclin-dependent kinase 7 (cdk7) (Xenopus laevis (African clawed frog)).